Reading from the N-terminus, the 265-residue chain is Polyphosphate glucokinase (265 aa).

Residues 1–18 (MTSTGPETSETPGATTQR) show a composition bias toward polar residues. Residues 1–22 (MTSTGPETSETPGATTQRHGFG) form a disordered region. 24–29 (DVGGSG) contributes to the ATP binding site.

Belongs to the ROK (NagC/XylR) family. Homodimer.

The catalysed reaction is [phosphate](n) + D-glucose = [phosphate](n-1) + D-glucose 6-phosphate + H(+). The enzyme catalyses D-glucose + ATP = D-glucose 6-phosphate + ADP + H(+). Functionally, catalyzes the phosphorylation of glucose using polyphosphate or ATP as the phosphoryl donor. Polyphosphate, rather than ATP, seems to be the major phosphate donor for the enzyme in M.tuberculosis. GTP, UTP and CTP can replace ATP as phosphoryl donor. The protein is Polyphosphate glucokinase (ppgK) of Mycobacterium tuberculosis (strain ATCC 25177 / H37Ra).